Reading from the N-terminus, the 289-residue chain is Rhodopsin (289 aa).

At 1–7 (YLVNPAG) the chain is on the extracellular side. A helical transmembrane segment spans residues 8-32 (YAALGAYMFLLILIGFPVNFLTLYV). Topologically, residues 33–44 (TLEHKKLRTPLN) are cytoplasmic. The helical transmembrane segment at 45-67 (YILLNLAVADLFMVLGGFTTTMY) threads the bilayer. At 68–81 (TSMHGYFVLGRLGC) the chain is on the extracellular side. Cysteines 81 and 158 form a disulfide. A helical membrane pass occupies residues 82–104 (NLEGFFATLGGEIALWSLVVLAI). The short motif at 105–107 (ERW) is the 'Ionic lock' involved in activated form stabilization element. Residues 105–123 (ERWIVGLKPIRNFRFTEDH) lie on the Cytoplasmic side of the membrane. A helical membrane pass occupies residues 124–144 (AIMGLAFSWVMALSCAVPPLA). Topologically, residues 145–173 (GWLRYIPEGIQGSCGVDYYTRAEGFNNES) are extracellular. Asn-171 carries N-linked (GlcNAc...) asparagine glycosylation. Residues 174–195 (FVIYMFTVHFLIPLSVIFFCYG) form a helical membrane-spanning segment. The Cytoplasmic portion of the chain corresponds to 196-223 (RLLCAVKEAAAAQQESETTQRAEKEVSR). A helical transmembrane segment spans residues 224–245 (MVVIMVIGFLVCWLPYASVAWW). At 246-257 (IFCNQGSDFGPI) the chain is on the extracellular side. A helical transmembrane segment spans residues 258–279 (FMTLPSFFAKRPAIYNPMIYIC). Lys-267 carries the N6-(retinylidene)lysine modification. Over 280-289 (MNKQFRHCMI) the chain is Cytoplasmic.

The protein belongs to the G-protein coupled receptor 1 family. Opsin subfamily. Post-translationally, phosphorylated on some or all of the serine and threonine residues present in the C-terminal region. In terms of processing, contains one covalently linked retinal chromophore.

It is found in the membrane. It localises to the cell projection. The protein localises to the cilium. Its subcellular location is the photoreceptor outer segment. Its function is as follows. Photoreceptor required for image-forming vision at low light intensity. While most salt water fish species use retinal as chromophore, most freshwater fish use 3-dehydroretinal, or a mixture of retinal and 3-dehydroretinal. Light-induced isomerization of 11-cis to all-trans retinal triggers a conformational change that activates signaling via G-proteins. Subsequent receptor phosphorylation mediates displacement of the bound G-protein alpha subunit by arrestin and terminates signaling. The chain is Rhodopsin (rho) from Limnocottus pallidus (Ray-finned fish).